The primary structure comprises 130 residues: MVMTDPIADMLTRIRNANQMSHLKVLVPASKLKLEILAVLKKEGFIKDFYLPQSSREIIISLKYAPNKERVIKGLKRVSKPGLRVYASAEQIPKVLNGLGVALVSTSKGILTDAQARLSQVGGEVLAYIW.

It belongs to the universal ribosomal protein uS8 family. In terms of assembly, part of the 30S ribosomal subunit. Contacts proteins S5 and S12.

In terms of biological role, one of the primary rRNA binding proteins, it binds directly to 16S rRNA central domain where it helps coordinate assembly of the platform of the 30S subunit. This chain is Small ribosomal subunit protein uS8, found in Onion yellows phytoplasma (strain OY-M).